The following is a 209-amino-acid chain: N-(5'-phosphoribosyl)anthranilate isomerase (209 aa).

Belongs to the TrpF family.

It catalyses the reaction N-(5-phospho-beta-D-ribosyl)anthranilate = 1-(2-carboxyphenylamino)-1-deoxy-D-ribulose 5-phosphate. It participates in amino-acid biosynthesis; L-tryptophan biosynthesis; L-tryptophan from chorismate: step 3/5. The chain is N-(5'-phosphoribosyl)anthranilate isomerase from Erythrobacter litoralis (strain HTCC2594).